Consider the following 627-residue polypeptide: 1-deoxy-D-xylulose-5-phosphate synthase (627 aa).

Thiamine diphosphate contacts are provided by residues His76 and 117-119; that span reads SHA. Asp148 lines the Mg(2+) pocket. Residues 149–150, Asn178, Phe288, and Glu370 contribute to the thiamine diphosphate site; that span reads GA. Asn178 contributes to the Mg(2+) binding site.

It belongs to the transketolase family. DXPS subfamily. As to quaternary structure, homodimer. Requires Mg(2+) as cofactor. It depends on thiamine diphosphate as a cofactor.

It catalyses the reaction D-glyceraldehyde 3-phosphate + pyruvate + H(+) = 1-deoxy-D-xylulose 5-phosphate + CO2. It functions in the pathway metabolic intermediate biosynthesis; 1-deoxy-D-xylulose 5-phosphate biosynthesis; 1-deoxy-D-xylulose 5-phosphate from D-glyceraldehyde 3-phosphate and pyruvate: step 1/1. Its function is as follows. Catalyzes the acyloin condensation reaction between C atoms 2 and 3 of pyruvate and glyceraldehyde 3-phosphate to yield 1-deoxy-D-xylulose-5-phosphate (DXP). This Cutibacterium acnes (strain DSM 16379 / KPA171202) (Propionibacterium acnes) protein is 1-deoxy-D-xylulose-5-phosphate synthase.